The primary structure comprises 308 residues: Ribonuclease Z (308 aa).

7 residues coordinate Zn(2+): His61, His63, Asp65, His66, His142, Asp211, and His270. Asp65 (proton acceptor) is an active-site residue.

This sequence belongs to the RNase Z family. As to quaternary structure, homodimer. Requires Zn(2+) as cofactor.

The catalysed reaction is Endonucleolytic cleavage of RNA, removing extra 3' nucleotides from tRNA precursor, generating 3' termini of tRNAs. A 3'-hydroxy group is left at the tRNA terminus and a 5'-phosphoryl group is left at the trailer molecule.. Functionally, zinc phosphodiesterase, which displays some tRNA 3'-processing endonuclease activity. Probably involved in tRNA maturation, by removing a 3'-trailer from precursor tRNA. The sequence is that of Ribonuclease Z from Clostridium beijerinckii (strain ATCC 51743 / NCIMB 8052) (Clostridium acetobutylicum).